We begin with the raw amino-acid sequence, 64 residues long: Kappa-lycotoxin-Os1a (64 aa).

Intrachain disulfides connect Cys-10-Cys-26, Cys-17-Cys-56, Cys-19-Cys-42, and Cys-28-Cys-40.

The protein belongs to the neurotoxin 04 (omega-agtx) family. 01 (type I omega-agtx) subfamily. In terms of tissue distribution, expressed by the venom gland.

It localises to the secreted. Functionally, insecticidal to house crickets. It induces an excitatory slow-onset impact that leads to irreversible spastic paralysis. It also modifies human voltage-gated potassium channel Kv1.5/KCNA5. Most likely, it binds to the voltage-sensing domain of the channel, suggesting it does not block the pore but prevents its opening at physiological membrane potentials. The recombinant peptide binds to the channel in an irreversible manner and slows down the hKv1.5 current activation kinetics. It is not toxic to mice, when intracranially injected (at 0.5 ug/g mouse). The chain is Kappa-lycotoxin-Os1a from Oculicosa supermirabilis (Central Asian wolf-spider).